The primary structure comprises 447 residues: Adenylosuccinate synthetase (447 aa).

GTP contacts are provided by residues 35-41 (GDEGKGK) and 63-65 (GHT). Aspartate 36 acts as the Proton acceptor in catalysis. Mg(2+) contacts are provided by aspartate 36 and glycine 63. Residues 36–39 (DEGK), 61–64 (NAGH), threonine 153, arginine 167, asparagine 245, threonine 260, and arginine 324 contribute to the IMP site. Histidine 64 acts as the Proton donor in catalysis. Substrate is bound at residue 320–326 (VTTKRKR). GTP contacts are provided by residues arginine 326, 352 to 354 (KLD), and 435 to 437 (GVG).

This sequence belongs to the adenylosuccinate synthetase family. In terms of assembly, homodimer. Requires Mg(2+) as cofactor.

The protein localises to the cytoplasm. The enzyme catalyses IMP + L-aspartate + GTP = N(6)-(1,2-dicarboxyethyl)-AMP + GDP + phosphate + 2 H(+). The protein operates within purine metabolism; AMP biosynthesis via de novo pathway; AMP from IMP: step 1/2. Its function is as follows. Plays an important role in the de novo pathway and in the salvage pathway of purine nucleotide biosynthesis. Catalyzes the first committed step in the biosynthesis of AMP from IMP. The sequence is that of Adenylosuccinate synthetase from Drosophila sechellia (Fruit fly).